Here is a 293-residue protein sequence, read N- to C-terminus: Thiamine-monophosphate kinase (293 aa).

Residues E25, V39, D40, D68, and D113 each coordinate Mg(2+). ATP contacts are provided by residues 112–113 (GD) and R136. Residue D194 coordinates Mg(2+). S196 is an ATP binding site. Mg(2+) is bound at residue D197. The substrate site is built by E243 and W286.

It belongs to the thiamine-monophosphate kinase family. In terms of assembly, homodimer.

It catalyses the reaction thiamine phosphate + ATP = thiamine diphosphate + ADP. Its pathway is cofactor biosynthesis; thiamine diphosphate biosynthesis; thiamine diphosphate from thiamine phosphate: step 1/1. With respect to regulation, is inhibited by AMP; the mode of AMP inhibition is uncompetitive for both TMP and ATP. Its function is as follows. Catalyzes the ATP-dependent phosphorylation of thiamine-monophosphate (TMP) to form thiamine-pyrophosphate (TPP), the active form of vitamin B1. The chain is Thiamine-monophosphate kinase from Pyrobaculum calidifontis (strain DSM 21063 / JCM 11548 / VA1).